The primary structure comprises 108 residues: Ig kappa chain V region BS-5 (108 aa).

Positions 1–23 (DVVMTQTPASVSEPVGGTVTIKC) are framework-1. Disulfide bonds link Cys-23–Cys-88 and Cys-80–Gly-108. The complementarity-determining-1 stretch occupies residues 24–34 (QASQSIYSNLA). A framework-2 region spans residues 35–49 (WYQZKPGQPPKLLIY). The interval 50–56 (KASTLES) is complementarity-determining-2. A framework-3 region spans residues 57–88 (GVPSRFKGSGSGTDFTLTISDLECADAATYFC). Residues 89-97 (QGSBYTGTV) form a complementarity-determining-3 region. A framework-4 region spans residues 98–107 (FGGGTEVVVK).

This Oryctolagus cuniculus (Rabbit) protein is Ig kappa chain V region BS-5.